Consider the following 61-residue polypeptide: Small ribosomal subunit protein uS14 (61 aa).

The Zn(2+) site is built by C24, C27, C40, and C43.

This sequence belongs to the universal ribosomal protein uS14 family. Zinc-binding uS14 subfamily. In terms of assembly, part of the 30S ribosomal subunit. Contacts proteins S3 and S10. The cofactor is Zn(2+).

Its function is as follows. Binds 16S rRNA, required for the assembly of 30S particles and may also be responsible for determining the conformation of the 16S rRNA at the A site. This Elusimicrobium minutum (strain Pei191) protein is Small ribosomal subunit protein uS14.